A 485-amino-acid polypeptide reads, in one-letter code: MGIFRFISISLAAVSAANAGHILSMGHAKTIPNSYIVVMKDGTTEEDFTHHQSWVQSIHTHNVTRRGLLDNAGVRHKYGFGSMMGYAGLFDEDTIKDISDDPKVMFVEPDTTITIHGELTQNDVPSWGLARISSQRPGTEDYTYDSSAGEGITVYSVDTGVDIHHEDFEGRASWGTNMIEDGYDKDGNGHGTHTAGTMVGKTFGIAKKAKVVAVKVLDNNGSGPTSGIIAGINWCAQHASQNGGTDKAVINMSLGGGSSSALNRAAAQAVQKGMFLAVAAGNDNQDARTSSPASEDTVCTVGASAENDERSSFSNWGPAVDLFAPGSNIVSTRPGGGSQSMSGTSMASPHVAGLGAYIMALEGISGSAVCDRLKQLGTSSVTNPGPGTRTNILINNGDAKNGGKKPSQPSQPPKPSQPSKPQQPSEPQEPSEPQEPAPGQPAPAPAPVPQHPHTPFPNDDFNFDDFWKKYFGTDHWRKTFGRFWN.

The N-terminal stretch at M1–A19 is a signal peptide. Residues G20–H116 constitute a propeptide that is removed on maturation. The 83-residue stretch at S34–H116 folds into the Inhibitor I9 domain. The Peptidase S8 domain occupies S126–K400. Residues D158 and H190 each act as charge relay system in the active site. N-linked (GlcNAc...) asparagine glycosylation occurs at N251. Residue S345 is the Charge relay system of the active site. Over residues G377–I394 the composition is skewed to polar residues. The disordered stretch occupies residues G377–N462. Pro residues predominate over residues P409 to P418. A compositionally biased stretch (low complexity) spans S419–Q428. Residues P433–P455 are compositionally biased toward pro residues.

This sequence belongs to the peptidase S8 family.

It localises to the secreted. Secreted subtilisin-like serine protease with keratinolytic activity that contributes to pathogenicity. The chain is Subtilisin-like protease 1 (SUB1) from Arthroderma otae (strain ATCC MYA-4605 / CBS 113480) (Microsporum canis).